The chain runs to 388 residues: Sulfate adenylyltransferase (388 aa).

It belongs to the sulfate adenylyltransferase family.

It catalyses the reaction sulfate + ATP + H(+) = adenosine 5'-phosphosulfate + diphosphate. It functions in the pathway sulfur metabolism; hydrogen sulfide biosynthesis; sulfite from sulfate: step 1/3. The sequence is that of Sulfate adenylyltransferase from Acaryochloris marina (strain MBIC 11017).